The chain runs to 603 residues: Probable potassium transport system protein Kup (603 aa).

The next 12 helical transmembrane spans lie at 15 to 35 (GLVF…IFLL), 43 to 63 (VIGV…VEYA), 94 to 114 (AAFI…DGVI), 136 to 156 (IGQG…FSVQ), 163 to 183 (ITWV…FSGI), 201 to 221 (AISF…EVIL), 244 to 264 (AWRL…AFII), 284 to 304 (IYIP…QAMI), 336 to 356 (IYIG…IFEF), 367 to 387 (GLAV…IFYL), 391 to 411 (MFRS…LLSN), and 415 to 435 (IPHG…LIII).

It belongs to the HAK/KUP transporter (TC 2.A.72) family.

It is found in the cell membrane. The catalysed reaction is K(+)(in) + H(+)(in) = K(+)(out) + H(+)(out). In terms of biological role, transport of potassium into the cell. Likely operates as a K(+):H(+) symporter. The protein is Probable potassium transport system protein Kup of Methanosarcina acetivorans (strain ATCC 35395 / DSM 2834 / JCM 12185 / C2A).